Here is a 238-residue protein sequence, read N- to C-terminus: Probable xyloglucan-specific endo-beta-1,4-glucanase A (238 aa).

The signal sequence occupies residues 1–18 (MKLSLSVALSLAAATAQA). N-linked (GlcNAc...) asparagine glycosylation is found at asparagine 106 and asparagine 171.

This sequence belongs to the glycosyl hydrolase 12 (cellulase H) family.

The protein resides in the secreted. The catalysed reaction is xyloglucan + H2O = xyloglucan oligosaccharides.. Its function is as follows. Catalyzes endohydrolysis of 1,4-beta-D-glucosidic linkages in xyloglucan with retention of the beta-configuration of the glycosyl residues. Specific for xyloglucan and does not hydrolyze other cell wall components. This Aspergillus fumigatus (strain CBS 144.89 / FGSC A1163 / CEA10) (Neosartorya fumigata) protein is Probable xyloglucan-specific endo-beta-1,4-glucanase A (xgeA).